A 325-amino-acid chain; its full sequence is UPF0285 protein MmarC6_0247 (325 aa).

This sequence belongs to the UPF0285 family.

The sequence is that of UPF0285 protein MmarC6_0247 from Methanococcus maripaludis (strain C6 / ATCC BAA-1332).